We begin with the raw amino-acid sequence, 291 residues long: N-acetylmannosamine kinase (291 aa).

ATP-binding positions include 5 to 12 (AIDIGGTK) and 132 to 139 (GVGGGVVS). Positions 156, 166, 168, and 173 each coordinate Zn(2+).

Belongs to the ROK (NagC/XylR) family. NanK subfamily. As to quaternary structure, homodimer.

It carries out the reaction an N-acyl-D-mannosamine + ATP = an N-acyl-D-mannosamine 6-phosphate + ADP + H(+). It functions in the pathway amino-sugar metabolism; N-acetylneuraminate degradation; D-fructose 6-phosphate from N-acetylneuraminate: step 2/5. Functionally, catalyzes the phosphorylation of N-acetylmannosamine (ManNAc) to ManNAc-6-P. In Shigella flexneri serotype 5b (strain 8401), this protein is N-acetylmannosamine kinase.